A 37-amino-acid polypeptide reads, in one-letter code: Large ribosomal subunit protein bL36c (37 aa).

This sequence belongs to the bacterial ribosomal protein bL36 family.

Its subcellular location is the plastid. It localises to the chloroplast. The chain is Large ribosomal subunit protein bL36c (rpl36) from Chlorella vulgaris (Green alga).